We begin with the raw amino-acid sequence, 308 residues long: Hydroxyacylglutathione hydrolase, mitochondrial (308 aa).

The N-terminal 13 residues, 1–13 (MVVGRGLLGRRSL), are a transit peptide targeting the mitochondrion. Zn(2+) is bound by residues histidine 102, histidine 104, aspartate 106, and histidine 107. Lysine 116 is modified (N6-acetyllysine). 2 residues coordinate Zn(2+): histidine 158 and aspartate 182. Residues 191-193 (KFY) and 221-223 (HEY) contribute to the substrate site. Zn(2+) is bound at residue histidine 221. Lysine 229 is modified (N6-acetyllysine; alternate). Residue lysine 229 is modified to N6-succinyllysine; alternate. Residue 297–300 (RREK) participates in substrate binding.

The protein belongs to the metallo-beta-lactamase superfamily. Glyoxalase II family. Monomer. The cofactor is Zn(2+). As to expression, expressed in liver and kidney.

Its subcellular location is the mitochondrion matrix. It localises to the cytoplasm. It carries out the reaction an S-(2-hydroxyacyl)glutathione + H2O = a 2-hydroxy carboxylate + glutathione + H(+). The enzyme catalyses (R)-S-lactoylglutathione + H2O = (R)-lactate + glutathione + H(+). The protein operates within secondary metabolite metabolism; methylglyoxal degradation; (R)-lactate from methylglyoxal: step 2/2. Functionally, thiolesterase that catalyzes the hydrolysis of S-D-lactoyl-glutathione to form glutathione and D-lactic acid. This is Hydroxyacylglutathione hydrolase, mitochondrial (HAGH) from Homo sapiens (Human).